We begin with the raw amino-acid sequence, 286 residues long: DegV domain-containing protein M6_Spy1658 (286 aa).

The 280-residue stretch at 3 to 282 folds into the DegV domain; the sequence is FTIMTDSTAD…PNTLAVFVIG (280 aa). Hexadecanoate contacts are provided by T62 and S94.

May bind long-chain fatty acids, such as palmitate, and may play a role in lipid transport or fatty acid metabolism. This is DegV domain-containing protein M6_Spy1658 from Streptococcus pyogenes serotype M6 (strain ATCC BAA-946 / MGAS10394).